Here is a 612-residue protein sequence, read N- to C-terminus: DNA mismatch repair protein MutL (612 aa).

The protein belongs to the DNA mismatch repair MutL/HexB family.

This protein is involved in the repair of mismatches in DNA. It is required for dam-dependent methyl-directed DNA mismatch repair. May act as a 'molecular matchmaker', a protein that promotes the formation of a stable complex between two or more DNA-binding proteins in an ATP-dependent manner without itself being part of a final effector complex. The polypeptide is DNA mismatch repair protein MutL (Bartonella quintana (strain Toulouse) (Rochalimaea quintana)).